Here is a 60-residue protein sequence, read N- to C-terminus: Large ribosomal subunit protein bL32 (60 aa).

A disordered region spans residues 1 to 43; sequence MAVQQNKKSPSKRGMHRSHDALTNPPLAIEPTTGEIHLRHHIS.

It belongs to the bacterial ribosomal protein bL32 family.

This is Large ribosomal subunit protein bL32 from Nitrosomonas europaea (strain ATCC 19718 / CIP 103999 / KCTC 2705 / NBRC 14298).